We begin with the raw amino-acid sequence, 270 residues long: Malonyl-[acyl-carrier protein] O-methyltransferase (270 aa).

This sequence belongs to the methyltransferase superfamily.

The enzyme catalyses malonyl-[ACP] + S-adenosyl-L-methionine = malonyl-[ACP] methyl ester + S-adenosyl-L-homocysteine. The protein operates within cofactor biosynthesis; biotin biosynthesis. Converts the free carboxyl group of a malonyl-thioester to its methyl ester by transfer of a methyl group from S-adenosyl-L-methionine (SAM). It allows to synthesize pimeloyl-ACP via the fatty acid synthetic pathway. The polypeptide is Malonyl-[acyl-carrier protein] O-methyltransferase (Magnetococcus marinus (strain ATCC BAA-1437 / JCM 17883 / MC-1)).